The following is a 142-amino-acid chain: MSTDKKQDESIAEKDWKVELSEQEYYVCREAGTERPFTGVLLDEQRDGLYVCKCCEAPLFPSDTKFDAGCGWPSFYKQLDDGNVDYREDVSHGMRRVEIFCKQCGSHLGHVFPDGPAPTGQRYCVNSLSMTFKGEDNVEVKG.

A MsrB domain is found at 13 to 135 (EKDWKVELSE…NSLSMTFKGE (123 aa)). Residues Cys-52, Cys-55, Cys-101, and Cys-104 each coordinate Zn(2+). Cys-124 functions as the Nucleophile in the catalytic mechanism.

It belongs to the MsrB Met sulfoxide reductase family. The cofactor is Zn(2+).

The catalysed reaction is L-methionyl-[protein] + [thioredoxin]-disulfide + H2O = L-methionyl-(R)-S-oxide-[protein] + [thioredoxin]-dithiol. The polypeptide is Peptide methionine sulfoxide reductase MsrB (Alteromonas mediterranea (strain DSM 17117 / CIP 110805 / LMG 28347 / Deep ecotype)).